Here is a 281-residue protein sequence, read N- to C-terminus: NADPH-dependent 7-cyano-7-deazaguanine reductase (281 aa).

88-90 (IES) serves as a coordination point for substrate. 90–91 (SK) is a binding site for NADPH. Cysteine 189 functions as the Thioimide intermediate in the catalytic mechanism. Aspartate 196 serves as the catalytic Proton donor. Position 228–229 (228–229 (HE)) interacts with substrate. Residue 257 to 258 (RG) participates in NADPH binding.

This sequence belongs to the GTP cyclohydrolase I family. QueF type 2 subfamily. In terms of assembly, homodimer.

It localises to the cytoplasm. The enzyme catalyses 7-aminomethyl-7-carbaguanine + 2 NADP(+) = 7-cyano-7-deazaguanine + 2 NADPH + 3 H(+). The protein operates within tRNA modification; tRNA-queuosine biosynthesis. In terms of biological role, catalyzes the NADPH-dependent reduction of 7-cyano-7-deazaguanine (preQ0) to 7-aminomethyl-7-deazaguanine (preQ1). The polypeptide is NADPH-dependent 7-cyano-7-deazaguanine reductase (Proteus mirabilis (strain HI4320)).